Reading from the N-terminus, the 271-residue chain is S-adenosylmethionine decarboxylase proenzyme (271 aa).

Serine 121 (schiff-base intermediate with substrate; via pyruvic acid) is an active-site residue. Pyruvic acid (Ser); by autocatalysis is present on serine 121. Histidine 126 acts as the Proton acceptor; for processing activity in catalysis. Cysteine 149 (proton donor; for catalytic activity) is an active-site residue.

The protein belongs to the prokaryotic AdoMetDC family. Type 2 subfamily. In terms of assembly, heterooctamer of four alpha and four beta chains arranged as a tetramer of alpha/beta heterodimers. Pyruvate serves as cofactor. Post-translationally, is synthesized initially as an inactive proenzyme. Formation of the active enzyme involves a self-maturation process in which the active site pyruvoyl group is generated from an internal serine residue via an autocatalytic post-translational modification. Two non-identical subunits are generated from the proenzyme in this reaction, and the pyruvate is formed at the N-terminus of the alpha chain, which is derived from the carboxyl end of the proenzyme. The post-translation cleavage follows an unusual pathway, termed non-hydrolytic serinolysis, in which the side chain hydroxyl group of the serine supplies its oxygen atom to form the C-terminus of the beta chain, while the remainder of the serine residue undergoes an oxidative deamination to produce ammonia and the pyruvoyl group blocking the N-terminus of the alpha chain.

It catalyses the reaction S-adenosyl-L-methionine + H(+) = S-adenosyl 3-(methylsulfanyl)propylamine + CO2. The protein operates within amine and polyamine biosynthesis; S-adenosylmethioninamine biosynthesis; S-adenosylmethioninamine from S-adenosyl-L-methionine: step 1/1. Functionally, catalyzes the decarboxylation of S-adenosylmethionine to S-adenosylmethioninamine (dcAdoMet), the propylamine donor required for the synthesis of the polyamines spermine and spermidine from the diamine putrescine. In Clostridium perfringens (strain SM101 / Type A), this protein is S-adenosylmethionine decarboxylase proenzyme.